We begin with the raw amino-acid sequence, 237 residues long: Neurogenin-1 (237 aa).

Positions 35–83 (LQQAASASGPPAPARRGAPNISRASEVPGAQDDEQERRRRRGRTRVRSE) are disordered. The span at 38–53 (AASASGPPAPARRGAP) shows a compositional bias: low complexity. Residues 92 to 144 (SRRVKANDRERNRMHNLNAALDALRSVLPSFPDDTKLTKIETLRFAYNYIWAL) enclose the bHLH domain. The tract at residues 175–209 (GPPSPASDAESWGSGAAAASPLSDPSSPAASEDFT) is disordered. The segment covering 180–207 (ASDAESWGSGAAAASPLSDPSSPAASED) has biased composition (low complexity).

Efficient DNA binding requires dimerization with another bHLH protein. Expression restricted to the embryonic nervous system.

Its subcellular location is the nucleus. Its function is as follows. Acts as a transcriptional regulator. Involved in the initiation of neuronal differentiation. Activates transcription by binding to the E box (5'-CANNTG-3'). Associates with chromatin to enhancer regulatory elements in genes encoding key transcriptional regulators of neurogenesis. In Homo sapiens (Human), this protein is Neurogenin-1 (NEUROG1).